The sequence spans 1159 residues: Caspase recruitment domain-containing protein 11 (1159 aa).

A CARD domain is found at 18 to 110 (EEEALWDNVE…ELYKLVTGKE (93 aa)). The interval 111 to 128 (PTRRFSTIVVEEGHEGLT) is linker. The stretch at 176-449 (FQERYYKMKE…KDNGSLDQSL (274 aa)) forms a coiled coil. Residues 441 to 496 (DNGSLDQSLPRHLPATIISQNLGDTSPRTNGQEADDSSTSEESPEDSKYFLPYHPP) are disordered. Residues S448 and S466 each carry the phosphoserine modification. Residues 450 to 671 (PRHLPATIIS…GHVRGTGPLV (222 aa)) are inhibitory domain (ID). Residues 457–472 (IISQNLGDTSPRTNGQ) show a composition bias toward polar residues. Residues 473 to 484 (EADDSSTSEESP) show a composition bias toward acidic residues. Phosphoserine is present on residues S512 and S540. Residues 532 to 578 (HEEDFTDGSPSSSRSLPVTSSFSKMQPHRSRSSIMSITAEPPGNDSI) are disordered. Residues 540-554 (SPSSSRSLPVTSSFS) show a composition bias toward low complexity. Residue S564 is modified to Phosphoserine; by PKC/PRKCB and PKC/PRKCQ. Phosphoserine is present on S598. The interval 610-631 (NHERYSFGPPSIHSSSSSHQSE) is disordered. Residues 620–630 (SIHSSSSSHQS) are compositionally biased toward low complexity. Phosphoserine; by PKC/PRKCB and PKC/PRKCQ occurs at positions 649 and 657. Positions 672-760 (QHTTLNGDGL…LITLHYKVNH (89 aa)) constitute a PDZ domain. Phosphoserine is present on residues S891 and S930. The region spanning 978-1145 (RRRPVLFTPT…LLRVLKDKIV (168 aa)) is the Guanylate kinase-like domain.

Homodimer; disulfide-linked. Homomultimer; polymerizes following activation, forming a nucleating helical template that seeds BCL10-filament formation via a CARD-CARD interaction. Interacts (via CARD domain) with BCL10 (via CARD domain); interaction takes place following CARD11 activation and polymerization, leading to the formation of a filamentous CBM complex assembly. Component of a CBM complex (CARD11-BCL10-MALT1) complex involved in NF-kappa-B activation. Found in a membrane raft complex, at least composed of BCL10, CARD11, DPP4 and IKBKB. Interacts (via PDZ domain) with DPP4 (via cytoplasmic tail). Post-translationally, phosphorylation at Ser-564, Ser-649 and Ser-657 by PRKCB and PRKCQ leads to a shift from an inactive to an active form that activates the NF-kappa-B signaling.

It localises to the cytoplasm. Its subcellular location is the membrane raft. Maintained in an autoinhibited state via homodimerization in which the CARD domain forms an extensive interaction with the adjacent linker and coiled-coil regions. Activation downstream of T-cell receptor (TCR) by phosphorylation by PRKCB and PRKCQ triggers CARD11 homooligomerization and BCL10 recruitment, followed by activation of NF-kappa-B. Its function is as follows. Adapter protein that plays a key role in adaptive immune response by transducing the activation of NF-kappa-B downstream of T-cell receptor (TCR) and B-cell receptor (BCR) engagement. Transduces signals downstream TCR or BCR activation via the formation of a multiprotein complex together with BCL10 and MALT1 that induces NF-kappa-B and MAP kinase p38 (MAPK11, MAPK12, MAPK13 and/or MAPK14) pathways. Upon activation in response to TCR or BCR triggering, CARD11 homooligomerizes to form a nucleating helical template that recruits BCL10 via CARD-CARD interaction, thereby promoting polymerization of BCL10 and subsequent recruitment of MALT1: this leads to I-kappa-B kinase (IKK) phosphorylation and degradation, and release of NF-kappa-B proteins for nuclear translocation. Its binding to DPP4 induces T-cell proliferation and NF-kappa-B activation in a T-cell receptor/CD3-dependent manner. Promotes linear ubiquitination of BCL10 by promoting the targeting of BCL10 to RNF31/HOIP. Stimulates the phosphorylation of BCL10. Also activates the TORC1 signaling pathway. The chain is Caspase recruitment domain-containing protein 11 from Mus musculus (Mouse).